Reading from the N-terminus, the 391-residue chain is 4-hydroxy-3-methylbut-2-en-1-yl diphosphate synthase (flavodoxin) (391 aa).

Positions 286, 289, 321, and 328 each coordinate [4Fe-4S] cluster.

It belongs to the IspG family. [4Fe-4S] cluster serves as cofactor.

It carries out the reaction (2E)-4-hydroxy-3-methylbut-2-enyl diphosphate + oxidized [flavodoxin] + H2O + 2 H(+) = 2-C-methyl-D-erythritol 2,4-cyclic diphosphate + reduced [flavodoxin]. It participates in isoprenoid biosynthesis; isopentenyl diphosphate biosynthesis via DXP pathway; isopentenyl diphosphate from 1-deoxy-D-xylulose 5-phosphate: step 5/6. In terms of biological role, converts 2C-methyl-D-erythritol 2,4-cyclodiphosphate (ME-2,4cPP) into 1-hydroxy-2-methyl-2-(E)-butenyl 4-diphosphate. This Corynebacterium diphtheriae (strain ATCC 700971 / NCTC 13129 / Biotype gravis) protein is 4-hydroxy-3-methylbut-2-en-1-yl diphosphate synthase (flavodoxin).